The sequence spans 376 residues: Succinyl-diaminopimelate desuccinylase (376 aa).

His-64 lines the Zn(2+) pocket. Residue Asp-66 is part of the active site. Residue Asp-97 coordinates Zn(2+). Residue Glu-131 is the Proton acceptor of the active site. Zn(2+) contacts are provided by Glu-132, Glu-160, and His-347.

Belongs to the peptidase M20A family. DapE subfamily. Homodimer. The cofactor is Zn(2+). Requires Co(2+) as cofactor.

The catalysed reaction is N-succinyl-(2S,6S)-2,6-diaminopimelate + H2O = (2S,6S)-2,6-diaminopimelate + succinate. Its pathway is amino-acid biosynthesis; L-lysine biosynthesis via DAP pathway; LL-2,6-diaminopimelate from (S)-tetrahydrodipicolinate (succinylase route): step 3/3. In terms of biological role, catalyzes the hydrolysis of N-succinyl-L,L-diaminopimelic acid (SDAP), forming succinate and LL-2,6-diaminopimelate (DAP), an intermediate involved in the bacterial biosynthesis of lysine and meso-diaminopimelic acid, an essential component of bacterial cell walls. In Wigglesworthia glossinidia brevipalpis, this protein is Succinyl-diaminopimelate desuccinylase.